A 699-amino-acid chain; its full sequence is Fervidolysin (699 aa).

Positions 1–21 are cleaved as a signal peptide; the sequence is MRKVLLIASIVALILALFSCA. Residues 22–149 constitute a propeptide that is removed on maturation; sequence NPSFEPRSKA…MYKIRKPGLN (128 aa). A Ca(2+)-binding site is contributed by Glu157. Residues 163–465 enclose the Peptidase S8 domain; the sequence is LWGLEAIGVT…YGLVKLDAAL (303 aa). The active-site Charge relay system is Asp190. Asp199 is a Ca(2+) binding site. The Charge relay system role is filled by His228. The Ca(2+) site is built by Lys239, Asp241, Lys243, and Ile245. Catalysis depends on Ser409, which acts as the Charge relay system.

The protein belongs to the peptidase S8 family. Undergoes auto-proteolytic processing. Once cleaved, the propeptide can remain associated with the protease and blocks its activity. The physiological activation of fervidolysin is proposed to be achieved through the stepwise removal of the propeptide accomplished by several proteolytic cleavages that may not be autolytic.

Its subcellular location is the cell surface. With respect to regulation, is inhibited by phenylmethylsulfonyl fluoride and 3,4-dichloroisocoumarin. EDTA and iodoacetate (1 to 5 mM) have only little effect on the enzyme activity. Protease able to degrade keratin into peptides. Is responsible for keratinolysis by F.pennivorans, which allows this bacterium to grow on native feathers. This is Fervidolysin from Fervidobacterium pennivorans.